The primary structure comprises 166 residues: 2-C-methyl-D-erythritol 2,4-cyclodiphosphate synthase (166 aa).

The a divalent metal cation site is built by Asp-15 and His-17. Residues 15–17 (DVH) and 43–44 (HS) each bind 4-CDP-2-C-methyl-D-erythritol 2-phosphate. His-51 is an a divalent metal cation binding site. 4-CDP-2-C-methyl-D-erythritol 2-phosphate contacts are provided by residues 65–67 (DIG), 141–144 (TTNE), and Arg-151.

The protein belongs to the IspF family. In terms of assembly, homotrimer. A divalent metal cation is required as a cofactor.

The catalysed reaction is 4-CDP-2-C-methyl-D-erythritol 2-phosphate = 2-C-methyl-D-erythritol 2,4-cyclic diphosphate + CMP. Its pathway is isoprenoid biosynthesis; isopentenyl diphosphate biosynthesis via DXP pathway; isopentenyl diphosphate from 1-deoxy-D-xylulose 5-phosphate: step 4/6. Its function is as follows. Involved in the biosynthesis of isopentenyl diphosphate (IPP) and dimethylallyl diphosphate (DMAPP), two major building blocks of isoprenoid compounds. Catalyzes the conversion of 4-diphosphocytidyl-2-C-methyl-D-erythritol 2-phosphate (CDP-ME2P) to 2-C-methyl-D-erythritol 2,4-cyclodiphosphate (ME-CPP) with a corresponding release of cytidine 5-monophosphate (CMP). This is 2-C-methyl-D-erythritol 2,4-cyclodiphosphate synthase from Synechococcus sp. (strain CC9311).